A 528-amino-acid polypeptide reads, in one-letter code: Extracellular serine/threonine protein CG31145 (528 aa).

Topologically, residues 1–12 (MAVLRTMKLKER) are cytoplasmic. Residues 1 to 76 (MAVLRTMKLK…LHEFKRKFLQ (76 aa)) constitute a propeptide that is removed on maturation. The helical transmembrane segment at 13–33 (LVISLGATLVLLTLLLIVDVQ) threads the bilayer. Residues 34–528 (MDFGVANRHL…VDGSETDVSS (495 aa)) are Lumenal-facing. A disordered region spans residues 77-130 (KSNASGSKEASTQAGASQSGGATSGQDAAAGASGGAAGPGTSRSTSTRKPTPHD). The N-linked (GlcNAc...) asparagine glycan is linked to asparagine 79. The segment covering 86–107 (ASTQAGASQSGGATSGQDAAAG) has biased composition (low complexity). Asparagine 173 is a glycosylation site (N-linked (GlcNAc...) asparagine). ATP-binding residues include glutamine 220, lysine 236, and glutamate 257. Glutamate 257 provides a ligand contact to Mn(2+). Asparagine 286 carries N-linked (GlcNAc...) asparagine glycosylation. 2 disulfide bridges follow: cysteine 312–cysteine 328 and cysteine 317–cysteine 321. An ATP-binding site is contributed by 339–342 (AAFL). Intrachain disulfides connect cysteine 376/cysteine 450 and cysteine 451/cysteine 510. The active site involves aspartate 408. Glutamate 413 contributes to the ATP binding site. An N-linked (GlcNAc...) asparagine glycan is attached at asparagine 420. Aspartate 428 provides a ligand contact to ATP. Aspartate 428 contacts Mn(2+).

This sequence belongs to the FAM20 family. Requires Mn(2+) as cofactor. In terms of tissue distribution, in embryos, prominently expressed in midline glia, salivary gland, intestine and dorsal vessel (heart). Not associated with biomineralization.

It is found in the golgi apparatus membrane. The protein localises to the secreted. It catalyses the reaction L-seryl-[protein] + ATP = O-phospho-L-seryl-[protein] + ADP + H(+). It carries out the reaction L-threonyl-[protein] + ATP = O-phospho-L-threonyl-[protein] + ADP + H(+). Functionally, golgi serine/threonine protein kinase that phosphorylates secretory pathway proteins within Ser-x-Glu/pSer motifs. The protein is Extracellular serine/threonine protein CG31145 of Drosophila melanogaster (Fruit fly).